The sequence spans 114 residues: MAEISSAKAMARTVRVSPRKTRLVLDLIRGKKVADAIAILKFTPNKAARVIEKTLNSAIANAENNFGLEKANLVVSETFANEGPTMKRFRPRAKGSASPINKRTTHVTVVVSEK.

It belongs to the universal ribosomal protein uL22 family. In terms of assembly, part of the 50S ribosomal subunit.

In terms of biological role, this protein binds specifically to 23S rRNA; its binding is stimulated by other ribosomal proteins, e.g. L4, L17, and L20. It is important during the early stages of 50S assembly. It makes multiple contacts with different domains of the 23S rRNA in the assembled 50S subunit and ribosome. The globular domain of the protein is located near the polypeptide exit tunnel on the outside of the subunit, while an extended beta-hairpin is found that lines the wall of the exit tunnel in the center of the 70S ribosome. The polypeptide is Large ribosomal subunit protein uL22 (Streptococcus pyogenes serotype M6 (strain ATCC BAA-946 / MGAS10394)).